The chain runs to 296 residues: MSAKIISGTEIRKEILGEIKDAVTEMKDKYGTVPGLVTILVGESPASMSYVSLKIKTALSLGFYEVQESLSVETTEAELLALIEKYNNDDSIHGVLVQLPLPKHINEQNIITAIDPDKDVDAFHPVNIGRLMIGGDDVKFLPCTPAGIQEMLVRSGVETAGAEVVVVGRSNIVGKPIAMMMAQKGIGANATVTIVHTGSRDLATHCRRADILIVAAGVPNLVKPEWIKPGATVIDVGVNRVGTNSETGKAILRGDVDFEAVKEIAGKITPVPGGVGPMTIAMLMKNTLASALAHSS.

Residues 168 to 170 (GRS), T197, and V238 each bind NADP(+).

The protein belongs to the tetrahydrofolate dehydrogenase/cyclohydrolase family. Homodimer.

The enzyme catalyses (6R)-5,10-methylene-5,6,7,8-tetrahydrofolate + NADP(+) = (6R)-5,10-methenyltetrahydrofolate + NADPH. It carries out the reaction (6R)-5,10-methenyltetrahydrofolate + H2O = (6R)-10-formyltetrahydrofolate + H(+). Its pathway is one-carbon metabolism; tetrahydrofolate interconversion. Catalyzes the oxidation of 5,10-methylenetetrahydrofolate to 5,10-methenyltetrahydrofolate and then the hydrolysis of 5,10-methenyltetrahydrofolate to 10-formyltetrahydrofolate. This is Bifunctional protein FolD from Desulfotalea psychrophila (strain LSv54 / DSM 12343).